Reading from the N-terminus, the 469-residue chain is Probable glycine dehydrogenase (decarboxylating) subunit 1 (469 aa).

This sequence belongs to the GcvP family. N-terminal subunit subfamily. In terms of assembly, the glycine cleavage system is composed of four proteins: P, T, L and H. In this organism, the P 'protein' is a heterodimer of two subunits.

It carries out the reaction N(6)-[(R)-lipoyl]-L-lysyl-[glycine-cleavage complex H protein] + glycine + H(+) = N(6)-[(R)-S(8)-aminomethyldihydrolipoyl]-L-lysyl-[glycine-cleavage complex H protein] + CO2. Its function is as follows. The glycine cleavage system catalyzes the degradation of glycine. The P protein binds the alpha-amino group of glycine through its pyridoxal phosphate cofactor; CO(2) is released and the remaining methylamine moiety is then transferred to the lipoamide cofactor of the H protein. In Staphylothermus marinus (strain ATCC 43588 / DSM 3639 / JCM 9404 / F1), this protein is Probable glycine dehydrogenase (decarboxylating) subunit 1.